The chain runs to 287 residues: Acetylglutamate kinase (287 aa).

Substrate-binding positions include 70-71, Arg-92, and Asn-184; that span reads GG.

Belongs to the acetylglutamate kinase family. ArgB subfamily.

Its subcellular location is the cytoplasm. It carries out the reaction N-acetyl-L-glutamate + ATP = N-acetyl-L-glutamyl 5-phosphate + ADP. Its pathway is amino-acid biosynthesis; L-arginine biosynthesis; N(2)-acetyl-L-ornithine from L-glutamate: step 2/4. In terms of biological role, catalyzes the ATP-dependent phosphorylation of N-acetyl-L-glutamate. The sequence is that of Acetylglutamate kinase from Roseobacter denitrificans (strain ATCC 33942 / OCh 114) (Erythrobacter sp. (strain OCh 114)).